The sequence spans 142 residues: Large ribosomal subunit protein uL11 (142 aa).

Belongs to the universal ribosomal protein uL11 family. As to quaternary structure, part of the ribosomal stalk of the 50S ribosomal subunit. Interacts with L10 and the large rRNA to form the base of the stalk. L10 forms an elongated spine to which L12 dimers bind in a sequential fashion forming a multimeric L10(L12)X complex. In terms of processing, one or more lysine residues are methylated.

Its function is as follows. Forms part of the ribosomal stalk which helps the ribosome interact with GTP-bound translation factors. This is Large ribosomal subunit protein uL11 from Mycoplasma mycoides subsp. mycoides SC (strain CCUG 32753 / NCTC 10114 / PG1).